The sequence spans 183 residues: MTATAQQLEFLKNSIKSIQDYPKPGILFRDVTSLLEDPKAYALSIELLVERYKNAGITKVVGTEARGFLFGAPVALGLGVGFVPVRKPRKLPRETIAETYALEYGTDQLEIHVDAIKPGDNVLVVDDLLATGGTIEATVKLIRRLGGKVTDAAFIINLFDLGGEQRLEKQGITCYSLVPFPGH.

Belongs to the purine/pyrimidine phosphoribosyltransferase family. Homodimer.

The protein resides in the cytoplasm. It carries out the reaction AMP + diphosphate = 5-phospho-alpha-D-ribose 1-diphosphate + adenine. The protein operates within purine metabolism; AMP biosynthesis via salvage pathway; AMP from adenine: step 1/1. Its function is as follows. Catalyzes a salvage reaction resulting in the formation of AMP, that is energically less costly than de novo synthesis. The protein is Adenine phosphoribosyltransferase of Salmonella heidelberg (strain SL476).